The primary structure comprises 633 residues: Pesticidal crystal protein Cry2Ad (633 aa).

The protein belongs to the delta endotoxin family.

Promotes colloidosmotic lysis by binding to the midgut epithelial cells of insects. This chain is Pesticidal crystal protein Cry2Ad (cry2Ad), found in Bacillus thuringiensis.